We begin with the raw amino-acid sequence, 288 residues long: Light-independent protochlorophyllide reductase iron-sulfur ATP-binding protein (288 aa).

Residues 10-15 (GIGKST) and K39 contribute to the ATP site. Mg(2+) is bound at residue S14. The [4Fe-4S] cluster site is built by C95 and C129. Residue 180 to 181 (NR) coordinates ATP.

This sequence belongs to the NifH/BchL/ChlL family. Homodimer. Protochlorophyllide reductase is composed of three subunits; ChlL, ChlN and ChlB. The cofactor is [4Fe-4S] cluster.

It catalyses the reaction chlorophyllide a + oxidized 2[4Fe-4S]-[ferredoxin] + 2 ADP + 2 phosphate = protochlorophyllide a + reduced 2[4Fe-4S]-[ferredoxin] + 2 ATP + 2 H2O. Its pathway is porphyrin-containing compound metabolism; chlorophyll biosynthesis (light-independent). In terms of biological role, component of the dark-operative protochlorophyllide reductase (DPOR) that uses Mg-ATP and reduced ferredoxin to reduce ring D of protochlorophyllide (Pchlide) to form chlorophyllide a (Chlide). This reaction is light-independent. The L component serves as a unique electron donor to the NB-component of the complex, and binds Mg-ATP. This chain is Light-independent protochlorophyllide reductase iron-sulfur ATP-binding protein, found in Trichodesmium erythraeum (strain IMS101).